The sequence spans 294 residues: Elongation factor Ts (294 aa).

The segment at 80-83 (TDFV) is involved in Mg(2+) ion dislocation from EF-Tu.

It belongs to the EF-Ts family.

It localises to the cytoplasm. Its function is as follows. Associates with the EF-Tu.GDP complex and induces the exchange of GDP to GTP. It remains bound to the aminoacyl-tRNA.EF-Tu.GTP complex up to the GTP hydrolysis stage on the ribosome. The protein is Elongation factor Ts of Polynucleobacter necessarius subsp. necessarius (strain STIR1).